We begin with the raw amino-acid sequence, 388 residues long: Galactokinase (388 aa).

33 to 36 (EHTD) contacts substrate. ATP is bound by residues S67 and 124-130 (GAGLSSS). Mg(2+) contacts are provided by S130 and E162. The active-site Proton acceptor is the D174. Y224 contacts substrate.

It belongs to the GHMP kinase family. GalK subfamily.

It localises to the cytoplasm. The enzyme catalyses alpha-D-galactose + ATP = alpha-D-galactose 1-phosphate + ADP + H(+). It functions in the pathway carbohydrate metabolism; galactose metabolism. Functionally, catalyzes the transfer of the gamma-phosphate of ATP to D-galactose to form alpha-D-galactose-1-phosphate (Gal-1-P). This Lacticaseibacillus paracasei (strain ATCC 334 / BCRC 17002 / CCUG 31169 / CIP 107868 / KCTC 3260 / NRRL B-441) (Lactobacillus paracasei) protein is Galactokinase.